Consider the following 456-residue polypeptide: Major facilitator superfamily domain-containing protein 10 (456 aa).

The next 3 membrane-spanning stretches (helical) occupy residues 25–45 (VIIVLFLGLLLDLLAFTLLLP), 87–107 (VLFGGLIGSAFSLLQFFSAPL), and 114–136 (YLGRRPVMMLSLTGLAISYAVWA). Residue asparagine 159 is glycosylated (N-linked (GlcNAc...) asparagine). Transmembrane regions (helical) follow at residues 179–199 (AVIGVAFSLAFTLGPMLGAFL), 203–223 (MVPWISLLFAISDMLFIFCFL), 278–298 (LVYFLYLFLFSGLEYTLSFLA), 311–328 (KMFFFIGLTMATIQGTYA), 345–365 (LLLVPAFLLIGWAHSLPTLGL), 366–386 (GLMLYSFAAAVVVPGLSTMVS), 403–423 (SLGALGRALGPVVAASVYWLT), and 424–444 (GAQVCFTVCSALFLLPFLLLW).

The protein belongs to the major facilitator superfamily. As to expression, esxpressed in luminal membrane of renal tubules. Expressed at the surface of eosinophils (at protein level).

Its subcellular location is the nucleus inner membrane. The protein localises to the cell membrane. Functionally, probable organic anion transporter which may serve as a transporter for some non-steroidal anti-inflammatory drugs (NSAIDs) as well as other organic anions across the luminal membranes of renal proximal tubules at the final excretion step into the urine. The sequence is that of Major facilitator superfamily domain-containing protein 10 (Mfsd10) from Mus musculus (Mouse).